Reading from the N-terminus, the 218-residue chain is Protein GrpE (218 aa).

The tract at residues 1–75 (MTTPNGMPDN…DVDPDLDGDG (75 aa)) is disordered. Residues 23-40 (SADRAEQAAEEAAARQAE) show a composition bias toward basic and acidic residues. Residues 48–75 (SEEEISPELEAEINDLLSDVDPDLDGDG) are compositionally biased toward acidic residues.

It belongs to the GrpE family. As to quaternary structure, homodimer.

The protein localises to the cytoplasm. Its function is as follows. Participates actively in the response to hyperosmotic and heat shock by preventing the aggregation of stress-denatured proteins, in association with DnaK and GrpE. It is the nucleotide exchange factor for DnaK and may function as a thermosensor. Unfolded proteins bind initially to DnaJ; upon interaction with the DnaJ-bound protein, DnaK hydrolyzes its bound ATP, resulting in the formation of a stable complex. GrpE releases ADP from DnaK; ATP binding to DnaK triggers the release of the substrate protein, thus completing the reaction cycle. Several rounds of ATP-dependent interactions between DnaJ, DnaK and GrpE are required for fully efficient folding. The chain is Protein GrpE from Corynebacterium glutamicum (strain ATCC 13032 / DSM 20300 / JCM 1318 / BCRC 11384 / CCUG 27702 / LMG 3730 / NBRC 12168 / NCIMB 10025 / NRRL B-2784 / 534).